Consider the following 275-residue polypeptide: Large ribosomal subunit protein uL2 (275 aa).

The interval 222–275 (GVAMNPVDHPMGGGEGRSSGGRHPCSPWGMPTKGYKTRKNKTTDKFIVRKRNKR) is disordered.

It belongs to the universal ribosomal protein uL2 family. As to quaternary structure, part of the 50S ribosomal subunit. Forms a bridge to the 30S subunit in the 70S ribosome.

In terms of biological role, one of the primary rRNA binding proteins. Required for association of the 30S and 50S subunits to form the 70S ribosome, for tRNA binding and peptide bond formation. It has been suggested to have peptidyltransferase activity; this is somewhat controversial. Makes several contacts with the 16S rRNA in the 70S ribosome. In Desulfatibacillum aliphaticivorans, this protein is Large ribosomal subunit protein uL2.